The primary structure comprises 502 residues: N-sulphoglucosamine sulphohydrolase (502 aa).

Positions M1–A20 are cleaved as a signal peptide. Residues D31 and D32 each contribute to the Ca(2+) site. An N-linked (GlcNAc...) asparagine glycan is attached at N41. Residue C70 coordinates Ca(2+). Residue C70 is the Nucleophile of the active site. Position 70 is a 3-oxoalanine (Cys) (C70). N-linked (GlcNAc...) asparagine glycosylation is found at N142 and N151. An intrachain disulfide couples C183 to C194. N-linked (GlcNAc...) asparagine glycosylation is present at N264. Ca(2+) is bound by residues D273 and N274. The N-linked (GlcNAc...) asparagine glycan is linked to N413. C481 and C495 form a disulfide bridge.

The protein belongs to the sulfatase family. The cofactor is Ca(2+). In terms of processing, the conversion to 3-oxoalanine (also known as C-formylglycine, FGly), of a serine or cysteine residue in prokaryotes and of a cysteine residue in eukaryotes, is critical for catalytic activity.

The protein resides in the lysosome. The catalysed reaction is N-sulfo-D-glucosamine + H2O = D-glucosamine + sulfate. In terms of biological role, catalyzes a step in lysosomal heparan sulfate degradation. The chain is N-sulphoglucosamine sulphohydrolase (SGSH) from Homo sapiens (Human).